The primary structure comprises 464 residues: ATP synthase subunit beta (464 aa).

151 to 158 (GGAGVGKT) lines the ATP pocket.

Belongs to the ATPase alpha/beta chains family. F-type ATPases have 2 components, CF(1) - the catalytic core - and CF(0) - the membrane proton channel. CF(1) has five subunits: alpha(3), beta(3), gamma(1), delta(1), epsilon(1). CF(0) has three main subunits: a(1), b(2) and c(9-12). The alpha and beta chains form an alternating ring which encloses part of the gamma chain. CF(1) is attached to CF(0) by a central stalk formed by the gamma and epsilon chains, while a peripheral stalk is formed by the delta and b chains.

It is found in the cell membrane. The catalysed reaction is ATP + H2O + 4 H(+)(in) = ADP + phosphate + 5 H(+)(out). Its function is as follows. Produces ATP from ADP in the presence of a proton gradient across the membrane. The catalytic sites are hosted primarily by the beta subunits. This chain is ATP synthase subunit beta, found in Clostridium kluyveri (strain ATCC 8527 / DSM 555 / NBRC 12016 / NCIMB 10680 / K1).